The chain runs to 365 residues: Cytochrome P450 71A3 (365 aa).

This sequence belongs to the cytochrome P450 family. Heme serves as cofactor.

Functionally, may have a role in maturation, such as during flavor formation or other metabolite production specific to aging tissues. This is Cytochrome P450 71A3 (CYP71A3) from Solanum melongena (Eggplant).